The primary structure comprises 339 residues: D-alanine--D-alanine ligase (339 aa).

The ATP-grasp domain occupies 126-333; the sequence is KQVLASVGMP…YSELVTRLVE (208 aa). ATP is bound at residue 158–213; the sequence is AGELGYPLFVKPANLGSSVGISKVSGPGELERALDLAFSLGRRVILEAMTAHKPRE. Mg(2+) contacts are provided by aspartate 286, glutamate 300, and asparagine 302.

This sequence belongs to the D-alanine--D-alanine ligase family. Mg(2+) is required as a cofactor. Mn(2+) serves as cofactor.

It localises to the cytoplasm. It catalyses the reaction 2 D-alanine + ATP = D-alanyl-D-alanine + ADP + phosphate + H(+). The protein operates within cell wall biogenesis; peptidoglycan biosynthesis. In terms of biological role, cell wall formation. The protein is D-alanine--D-alanine ligase of Deinococcus geothermalis (strain DSM 11300 / CIP 105573 / AG-3a).